Consider the following 1795-residue polypeptide: Putative surface cell antigen sca2 (1795 aa).

The N-terminal stretch at 1–33 is a signal peptide; the sequence is MNLQNSHSKKYVLTFFMSTCLLTSSFLSTSARA. Residues 360–373 show a composition bias toward polar residues; that stretch reads FLNNNDTTKPSTGR. Disordered regions lie at residues 360 to 391, 664 to 709, and 1354 to 1441; these read FLNN…SNQS, LEQT…SSNS, and KQEN…DEEL. Pro residues predominate over residues 672–700; sequence PNPPPLPLNGGIPNPPPLPLNGSMPPPPL. 2 stretches are compositionally biased toward basic and acidic residues: residues 1364 to 1383 and 1398 to 1409; these read SSTK…EQSD and SKNDKSSDDKKS. Residues 1417 to 1432 are compositionally biased toward acidic residues; sequence DEDDTGYATDEEELEE. Residues 1516 to 1795 form the Autotransporter domain; that stretch reads ETSINRGVWI…QGLIKLKVNL (280 aa).

The protein localises to the cell outer membrane. The chain is Putative surface cell antigen sca2 (sca2) from Rickettsia conorii (strain ATCC VR-613 / Malish 7).